Reading from the N-terminus, the 489-residue chain is Inactive receptor-like serine/threonine-protein kinase At2g40270 (489 aa).

The N-terminal stretch at 1–23 (MLFKMRSFVAFVLLLSWFGSCCS) is a signal peptide. At 24-139 (LKDQAVDFLK…PRNSHSSVPL (116 aa)) the chain is on the extracellular side. The disordered stretch occupies residues 67–130 (KDLPSRKDRK…SAPLANSPIP (64 aa)). The span at 81 to 90 (AATTTPSSSP) shows a compositional bias: low complexity. A compositionally biased stretch (polar residues) spans 99-116 (TKASTVSEPQKRSSTQDV). Over residues 117–130 (SPSPSAPLANSPIP) the composition is skewed to low complexity. The chain crosses the membrane as a helical span at residues 140–160 (VVGCVGGAFFLLLVATGLYFF). At 161 to 489 (TSKAGKTVNP…WAELEVLSTA (329 aa)) the chain is on the cytoplasmic side. Residues 200-460 (EDFSNVIGSC…PTMQEVTGWL (261 aa)) enclose the Protein kinase domain.

It belongs to the protein kinase superfamily. Ser/Thr protein kinase family.

It localises to the cell membrane. This chain is Inactive receptor-like serine/threonine-protein kinase At2g40270, found in Arabidopsis thaliana (Mouse-ear cress).